The following is a 292-amino-acid chain: 1,4-dihydroxy-2-naphthoate octaprenyltransferase (292 aa).

Transmembrane regions (helical) follow at residues 35–55, 101–121, 137–157, 166–186, 220–240, and 271–291; these read AAVW…VIGV, ALAG…VGAI, GYAG…AVLG, VDWV…SVLV, LLAV…WCVV, and TGLA…FGQL.

Belongs to the MenA family. Type 1 subfamily. Mg(2+) is required as a cofactor.

It localises to the cell membrane. The enzyme catalyses an all-trans-polyprenyl diphosphate + 1,4-dihydroxy-2-naphthoate + H(+) = a 2-demethylmenaquinol + CO2 + diphosphate. It participates in quinol/quinone metabolism; menaquinone biosynthesis; menaquinol from 1,4-dihydroxy-2-naphthoate: step 1/2. Its activity is regulated as follows. Activity is abolished by EDTA. Inhibited by Ro 48-8071, which is non-competitive with regard to DHNA and competitive with regard to the isoprenyldiphosphate substrate. Its function is as follows. Conversion of 1,4-dihydroxy-2-naphthoate (DHNA) to demethylmenaquinone (DMK). Can use a variety of allylic isoprenyl diphosphates as substrates but has a requirement for at least three isoprene units. The protein is 1,4-dihydroxy-2-naphthoate octaprenyltransferase of Mycobacterium tuberculosis (strain ATCC 25618 / H37Rv).